The sequence spans 409 residues: ORC1-type DNA replication protein 1 (409 aa).

ATP is bound by residues 63-67 (TGKTA), Tyr206, and Arg218.

The protein belongs to the CDC6/cdc18 family.

Its function is as follows. Involved in regulation of DNA replication. The chain is ORC1-type DNA replication protein 1 (cdc6-1) from Archaeoglobus fulgidus (strain ATCC 49558 / DSM 4304 / JCM 9628 / NBRC 100126 / VC-16).